Reading from the N-terminus, the 565-residue chain is Periplasmic trehalase (565 aa).

The signal sequence occupies residues 1–30 (MKSPAPSRPQKMALIPACIFLCFAALSVQA). Substrate contacts are provided by residues Arg152, 159–160 (WD), Asn196, 205–207 (RSQ), 277–279 (RPE), and Gly310. Active-site proton donor/acceptor residues include Asp312 and Glu496. Glu511 provides a ligand contact to substrate. A disordered region spans residues 538–565 (PCDNVPATRPTVKSATTQPSTKEAQPTP). The span at 548–565 (TVKSATTQPSTKEAQPTP) shows a compositional bias: polar residues.

Belongs to the glycosyl hydrolase 37 family. As to quaternary structure, monomer.

It is found in the periplasm. The catalysed reaction is alpha,alpha-trehalose + H2O = alpha-D-glucose + beta-D-glucose. Provides the cells with the ability to utilize trehalose at high osmolarity by splitting it into glucose molecules that can subsequently be taken up by the phosphotransferase-mediated uptake system. The chain is Periplasmic trehalase from Escherichia coli (strain K12 / MC4100 / BW2952).